The sequence spans 444 residues: UPF0053 protein YhdP (444 aa).

The 201-residue stretch at 1-201 folds into the CNNM transmembrane domain; sequence MDIVNLILVA…YKSGEINQSE (201 aa). Transmembrane regions (helical) follow at residues 7–27, 61–81, and 101–121; these read ILVA…FAII, ACQL…ESTI, and VISF…VGEL. 2 CBS domains span residues 220–282 and 284–344; these read MIPR…SVDS and ISQF…IRDE.

The protein belongs to the UPF0053 family.

Its subcellular location is the cell membrane. This is UPF0053 protein YhdP (yhdP) from Bacillus subtilis (strain 168).